A 389-amino-acid chain; its full sequence is MQYKKTLVASALAATTLAAYAPSEPWSTLTPTATYSGGVTDYASTFGIAVQPISTTSSASSAATTASSKAKRAASQIGDGQVQAATTTASVSTKSTAAAVSQIGDGQVQATTKTTAAAVSQIGDGQIQATTKTTSAKTTAAAVSQIGDGQIQATTTTLAPKSTAAAVSQIGDGQVQATTKTTAAAVSQIGDGQVQATTKTTAAAVSQIGDGQVQATTKTTAAAVSQIGDGQVQATTKTTAAAVSQITDGQVQATTKTTQAASQVSDGQVQATTATSASAAATSTDPVDAVSCKTSGTLEMNLKGGILTDGKGRIGSIVANRQFQFDGPPPQAGAIYAAGWSITPDGNLAIGDNDVFYQCLSGTFYNLYDEHIGSQCTPVHLEAIDLIDC.

The first 18 residues, 1-18, serve as a signal peptide directing secretion; that stretch reads MQYKKTLVASALAATTLA. The propeptide occupies 19–72; that stretch reads AYAPSEPWSTLTPTATYSGGVTDYASTFGIAVQPISTTSSASSAATTASSKAKR. PIR1/2/3 repeat units follow at residues 71–89, 97–115, 116–134, 140–158, 164–182, 183–201, 202–220, 221–239, 240–257, and 258–276; these read KRAA…TTTA, AAAV…TKTT, AAAV…TTTL, AAAV…TTKT, and TQAA…TATS.

The protein belongs to the PIR protein family. Post-translationally, covalently linked to beta-1,3-glucan of the inner cell wall layer via an alkali-sensitive ester linkage between the gamma-carboxyl group of glutamic acids, arising from specific glutamines within the PIR1/2/3 repeats, and hydroxyl groups of glucoses of beta-1,3-glucan chains. In terms of processing, the propeptide is cleaved off in the late Golgi. While both peptides are secreted, only a fraction of the mature glycoprotein is incorporated into the cell wall. O-glycosylated. Extensively O-mannosylated.

It is found in the secreted. Its subcellular location is the cell wall. Component of the outer cell wall layer. Required for stability of the cell wall and for optimal growth. Required for resistance against several antifungal and cell wall-perturbing agents and for tolerance to heat shock. The sequence is that of Cell wall mannoprotein HSP150 (HSP150) from Saccharomyces cerevisiae (strain YJM789) (Baker's yeast).